A 638-amino-acid chain; its full sequence is Epithelial sodium channel subunit beta (638 aa).

Residues 1–50 (MPVKKYLLKCLHRLQKGPGYTYKELLVWYCNNTNTHGPKRIICEGPKKKA) lie on the Cytoplasmic side of the membrane. The chain crosses the membrane as a helical span at residues 51 to 71 (MWFLLTLLFACLVCWQWGVFI). Topologically, residues 72–530 (QTYLSWEVSV…GGQFGFWMGG (459 aa)) are extracellular. 9 disulfides stabilise this stretch: Cys-98–Cys-270, Cys-182–Cys-187, Cys-194–Cys-201, Cys-247–Cys-254, Cys-359–Cys-446, Cys-384–Cys-442, Cys-388–Cys-438, Cys-397–Cys-424, and Cys-399–Cys-413. N-linked (GlcNAc...) asparagine glycans are attached at residues Asn-135 and Asn-141. N-linked (GlcNAc...) asparagine glycosylation occurs at Asn-205. The chain crosses the membrane as a helical span at residues 531–551 (SVLCLIEFGEIIIDFIWITII). At 552–638 (KLVASCKGLR…MESDSEVEAI (87 aa)) the chain is on the cytoplasmic side. The tract at residues 594 to 620 (SCRPHGEVYPDQQTLPIPGTPPPNYDS) is disordered. Residues 614–618 (PPPNY) carry the PY motif; recruits WW domain-containing proteins and is thereby required for ubiquitination and inhibition of the channel by NEDD4 and NEDD4L motif. A phosphoserine mark is found at Ser-631 and Ser-633.

The protein belongs to the amiloride-sensitive sodium channel (TC 1.A.6) family. SCNN1B subfamily. As to quaternary structure, component of the heterotrimeric epithelial sodium channel (ENaC) composed of an alpha/SCNN1A, a beta/SCNN1B and a gamma/SCNN1G subunit. Interacts with WWP1 (via WW domains). Interacts with WWP2 (via WW domains); inhibits the channel. Interacts with the full-length immature form of PCSK9 (pro-PCSK9). Interacts (N-glycosylated) with BPIFA1; the interaction is direct and inhibits the proteolytic processing of SCNN1A and SCNN1G and the activation of ENaC. Post-translationally, ubiquitinated. Can be ubiquitinated at multiple sites and undergo monoubiquitination and polyubiquitination. Ubiquitination by NEDD4 or NEDD4L inhibits the ENaC channel through endocytosis, intracellular retention and degradation of its individual subunits. However, some studies could not confirm the ubiquitination of this subunit of the ENaC. In terms of processing, N-glycosylated. N-glycosylation is required for interaction with BPIFA1. Phosphorylated on serine and threonine residues. Aldosterone and insulin increase the basal level of phosphorylation. In terms of tissue distribution, lung and kidney.

Its subcellular location is the apical cell membrane. The protein localises to the cytoplasmic vesicle membrane. The enzyme catalyses Na(+)(in) = Na(+)(out). Originally identified and characterized by its inhibition by the diuretic drug amiloride. Functionally, this is one of the three pore-forming subunits of the heterotrimeric epithelial sodium channel (ENaC), a critical regulator of sodium balance and fluid homeostasis. ENaC operates in epithelial tissues, where it mediates the electrodiffusion of sodium ions from extracellular fluid through the apical membrane of cells, with water following osmotically. It plays a key role in maintaining sodium homeostasis through electrogenic sodium reabsorption in the kidneys. This subunit is not essential for ENaC function in airway surface liquid homeostasis and proper mucus clearance. The chain is Epithelial sodium channel subunit beta from Mus musculus (Mouse).